The chain runs to 507 residues: Phosphoprotein (507 aa).

An interaction with N0 region spans residues 1 to 48 (MAEEQARHVKNGLECIRALKAEPIGSLAIEEAMAAWSEISDNPGQERA). Disordered regions lie at residues 41 to 99 (DNPG…PPRN), 134 to 163 (GLDGDSTLSGGDNESENSDVDIGEPDTEGY), 201 to 231 (NNFPKLGKTLNVPPPPDPGRASTSGTPIKKG), and 250 to 273 (GATQCARKSPSEPSGPGAPAGNVP). Residue Ser86 is modified to Phosphoserine. Low complexity predominate over residues 134–145 (GLDGDSTLSGGD). A compositionally biased stretch (acidic residues) spans 146 to 160 (NESENSDVDIGEPDT). Ser151 is modified (phosphoserine). The segment covering 260–270 (SEPSGPGAPAG) has biased composition (low complexity). Residues 304–376 (GDYYDDELFS…LSSIMIAIPG (73 aa)) are multimerization. Interaction with the L polymerase regions lie at residues 361–377 (STLEGHLSSIMIAIPGL) and 396–410 (PIIGRDSGRALAEVL). A x domain (XD) region spans residues 457–507 (GPASRSVIRSIIKSSRLEEDRKRYLMTLLDDIKGANDLAKFHQMLMKIIMK). The tract at residues 459 to 507 (ASRSVIRSIIKSSRLEEDRKRYLMTLLDDIKGANDLAKFHQMLMKIIMK) is interaction with the nucleocapsid (N-RNA).

Belongs to the morbillivirus P protein family. Homotetramer. Interacts (via multimerization domain and XD domain) with polymerase L; this interaction forms the polymerase L-P complex. Interacts (via N-terminus) with N0 (via Ncore); this interaction allows P to chaperon N0 to avoid N polymerization and non-specific RNA binding before encapsidation. Interacts (via C-terminus) with N-RNA template (via Ntail); this interaction maintains the P/L complex anchored to the nucleocapsid template during the sequential transcription. Interacts (via C-terminus) with protein C this interaction allows C to associate with the ribonucleocapsid. In terms of processing, phosphorylation on serines by host CK2 is necessary for the formation of viral factories.

Functionally, essential cofactor of the RNA polymerase L that plays a central role in the transcription and replication by forming the polymerase complex with RNA polymerase L and recruiting L to the genomic N-RNA template for RNA synthesis. Also plays a central role in the encapsidation of nascent RNA chains by forming the encapsidation complex with the nucleocapsid protein N (N-P complex). Acts as a chaperone for newly synthesized free N protein, so-called N0, allowing encapsidation of nascent RNA chains during replication. The nucleoprotein protein N prevents excessive phosphorylation of P, which leads to down-regulation of viral transcription/ replication. Participates, together with N, in the formation of viral factories (viroplasms), which are large inclusions in the host cytoplasm where replication takes place. The protein is Phosphoprotein (P/V) of Measles virus (strain Edmonston) (MeV).